Here is a 361-residue protein sequence, read N- to C-terminus: Inhibin alpha chain (361 aa).

The N-terminal stretch at 1–21 (MLPLLLPLQLLLLMVMKGGHG) is a signal peptide. A propeptide spanning residues 22–64 (CQGPELDRELVLAKVRALVLDALGPPNASKDGGKPVAQRLTRR) is cleaved from the precursor. Positions 45–82 (GPPNASKDGGKPVAQRLTRRHAHTGGSTRRSMENEDED) are disordered. Asn48, Asn144, and Asn266 each carry an N-linked (GlcNAc...) asparagine glycan. The propeptide at 65-230 (HAHTGGSTRR…PPSVGERARR (166 aa)) is inhibin alpha N-terminal region. Disulfide bonds link Cys260-Cys323, Cys289-Cys358, and Cys293-Cys360.

This sequence belongs to the TGF-beta family. As to quaternary structure, dimeric, linked by one or more disulfide bonds. Activin B is a dimer of alpha and beta-B. Inhibin A is a dimer of alpha and beta-A. Inhibin B is a dimer of alpha and beta-B. Interacts with TGFBR3L; this interaction regulates female fertility. In terms of processing, proteolytic processing yields a number of bioactive forms, consisting either solely of the mature alpha chain, of the most N-terminal propeptide linked through a disulfide bond to the mature alpha chain, or of the entire proprotein.

The protein resides in the secreted. Its function is as follows. Inhibins and activins inhibit and activate, respectively, the secretion of follitropin by the pituitary gland. Inhibins/activins are involved in regulating a number of diverse functions such as hypothalamic and pituitary hormone secretion, gonadal hormone secretion, germ cell development and maturation, erythroid differentiation, insulin secretion, nerve cell survival, embryonic axial development or bone growth, depending on their subunit composition. Inhibins appear to oppose the functions of activins. In terms of biological role, inhibin A is a dimer of alpha/INHA and beta-A/INHBA that functions as a feedback regulator in the hypothalamic-pituitary-gonadal (HPG) axis. Inhibits the secretion of FSH from the anterior pituitary gland by acting on pituitary gonadotrope cells. Antagonizes activin A by binding to the proteoglycan, betaglycan, and forming a stable complex with and, thereby, sequestering type II activin receptors while excluding type I receptor. Functionally, inhibin B is a dimer of alpha and beta-B that plays a crucial role in the regulation of the reproductive system by inhibiting the secretion of follicle-stimulating hormone (FSH) from the anterior pituitary gland. Thereby, maintains reproductive homeostasis in both males and females. Acts as a more potent suppressor of FSH release than inhibin A. Functions as competitive receptor antagonist binding activin type II receptors with high affinity in the presence of the TGF-beta type III coreceptor/TGFBR3L. The sequence is that of Inhibin alpha chain (INHA) from Trichosurus vulpecula (Brush-tailed possum).